Consider the following 294-residue polypeptide: tRNA dimethylallyltransferase (294 aa).

Position 10–17 (10–17 (GPTAVGKT)) interacts with ATP. A substrate-binding site is contributed by 12-17 (TAVGKT). An interaction with substrate tRNA region spans residues 35 to 38 (DSQQ).

This sequence belongs to the IPP transferase family. As to quaternary structure, monomer. Requires Mg(2+) as cofactor.

The catalysed reaction is adenosine(37) in tRNA + dimethylallyl diphosphate = N(6)-dimethylallyladenosine(37) in tRNA + diphosphate. Its function is as follows. Catalyzes the transfer of a dimethylallyl group onto the adenine at position 37 in tRNAs that read codons beginning with uridine, leading to the formation of N6-(dimethylallyl)adenosine (i(6)A). The protein is tRNA dimethylallyltransferase of Streptococcus pneumoniae serotype 2 (strain D39 / NCTC 7466).